The primary structure comprises 324 residues: ATP-dependent 6-phosphofructokinase (324 aa).

G15 contributes to the ATP binding site. 25 to 29 (RGVVR) contacts ADP. ATP is bound by residues 76–77 (RF) and 106–109 (GDGS). D107 serves as a coordination point for Mg(2+). Residue 130-132 (TID) coordinates substrate. The Proton acceptor role is filled by D132. ADP is bound at residue R159. Substrate-binding positions include R167 and 174–176 (MGR). Residues 190-192 (GCE), K216, and 218-220 (KRH) each bind ADP. Residues E227, R248, and 254-257 (HIQR) contribute to the substrate site.

This sequence belongs to the phosphofructokinase type A (PFKA) family. ATP-dependent PFK group I subfamily. Prokaryotic clade 'B1' sub-subfamily. Homotetramer. The cofactor is Mg(2+).

The protein resides in the cytoplasm. The catalysed reaction is beta-D-fructose 6-phosphate + ATP = beta-D-fructose 1,6-bisphosphate + ADP + H(+). It participates in carbohydrate degradation; glycolysis; D-glyceraldehyde 3-phosphate and glycerone phosphate from D-glucose: step 3/4. Its activity is regulated as follows. Allosterically activated by ADP and other diphosphonucleosides, and allosterically inhibited by phosphoenolpyruvate. Functionally, catalyzes the phosphorylation of D-fructose 6-phosphate to fructose 1,6-bisphosphate by ATP, the first committing step of glycolysis. In Haemophilus ducreyi (strain 35000HP / ATCC 700724), this protein is ATP-dependent 6-phosphofructokinase.